The primary structure comprises 393 residues: Acetate kinase (393 aa).

Asparagine 8 contributes to the Mg(2+) binding site. Lysine 15 is a binding site for ATP. Residue arginine 91 participates in substrate binding. Catalysis depends on aspartate 148, which acts as the Proton donor/acceptor. ATP is bound by residues 206–210, 280–282, and 325–329; these read HLGSG, DMR, and GVGEN. Glutamate 376 is a Mg(2+) binding site.

This sequence belongs to the acetokinase family. As to quaternary structure, homodimer. It depends on Mg(2+) as a cofactor. Mn(2+) serves as cofactor.

It is found in the cytoplasm. It catalyses the reaction acetate + ATP = acetyl phosphate + ADP. Its pathway is metabolic intermediate biosynthesis; acetyl-CoA biosynthesis; acetyl-CoA from acetate: step 1/2. Catalyzes the formation of acetyl phosphate from acetate and ATP. Can also catalyze the reverse reaction. This is Acetate kinase from Rhizobium meliloti (Ensifer meliloti).